The chain runs to 597 residues: Arginine--tRNA ligase (597 aa).

The 'HIGH' region motif lies at 138–148 (ANPTGPMHVGH).

This sequence belongs to the class-I aminoacyl-tRNA synthetase family. Monomer.

It localises to the cytoplasm. It catalyses the reaction tRNA(Arg) + L-arginine + ATP = L-arginyl-tRNA(Arg) + AMP + diphosphate. The sequence is that of Arginine--tRNA ligase from Rhodopseudomonas palustris (strain HaA2).